The primary structure comprises 235 residues: RNA polymerase sigma-E factor (235 aa).

A Polymerase core binding motif is present at residues 82-95; it reads DLISVGTIGLIKAV. The segment at residues 202 to 221 is a DNA-binding region (H-T-H motif); sequence QKEVADMLGISQSYISRLEK.

The protein belongs to the sigma-70 factor family.

Its function is as follows. Sigma factors are initiation factors that promote the attachment of RNA polymerase to specific initiation sites and are then released. This sigma factor is responsible for the expression of sporulation specific genes. In Clostridium acetobutylicum (strain ATCC 824 / DSM 792 / JCM 1419 / IAM 19013 / LMG 5710 / NBRC 13948 / NRRL B-527 / VKM B-1787 / 2291 / W), this protein is RNA polymerase sigma-E factor (sigE).